The sequence spans 96 residues: Large ribosomal subunit protein bL28 (96 aa).

The protein belongs to the bacterial ribosomal protein bL28 family.

The chain is Large ribosomal subunit protein bL28 from Orientia tsutsugamushi (strain Boryong) (Rickettsia tsutsugamushi).